The following is a 308-amino-acid chain: MSAQKPGLHPRNRHHSRYDLATLCQVNPELRQFLTLTPAGEQSVDFANPLAVKALNKALLAHFYAVANWDIPDGFLCPPVPGRADYIHHLADLLAEASGTIPANASILDIGVGANCIYPLIGVHEYGWRFTGSETSSQALSSAQAIISSNPGLNRAIRLRRQKESGAIFNGIIHKNEQYDATLCNPPFHDSAAAARAGSERKRRNLGLNKDDALNFGGQQQELWCEGGEVTFIKKMIEESKGFAKQVMWFTSLVSRGENLPPLYRALTDVGAVKVVKKEMAQGQKQSRFIAWTFMNDEQRRRFVNRQR.

Belongs to the methyltransferase superfamily. METTL16/RlmF family.

It is found in the cytoplasm. It carries out the reaction adenosine(1618) in 23S rRNA + S-adenosyl-L-methionine = N(6)-methyladenosine(1618) in 23S rRNA + S-adenosyl-L-homocysteine + H(+). Its function is as follows. Specifically methylates the adenine in position 1618 of 23S rRNA. The chain is Ribosomal RNA large subunit methyltransferase F from Escherichia coli (strain K12 / MC4100 / BW2952).